Here is a 94-residue protein sequence, read N- to C-terminus: Co-chaperonin GroES (94 aa).

The protein belongs to the GroES chaperonin family. As to quaternary structure, heptamer of 7 subunits arranged in a ring. Interacts with the chaperonin GroEL.

It is found in the cytoplasm. Functionally, together with the chaperonin GroEL, plays an essential role in assisting protein folding. The GroEL-GroES system forms a nano-cage that allows encapsulation of the non-native substrate proteins and provides a physical environment optimized to promote and accelerate protein folding. GroES binds to the apical surface of the GroEL ring, thereby capping the opening of the GroEL channel. This chain is Co-chaperonin GroES, found in Clostridium kluyveri (strain NBRC 12016).